We begin with the raw amino-acid sequence, 153 residues long: Pheromone-binding protein Gp-9 (153 aa).

Positions 1–19 are cleaved as a signal peptide; it reads MKTFVLHIFIFALVAFASA. Disulfide bonds link C37–C77, C73–C129, and C118–C138.

This sequence belongs to the PBP/GOBP family. In terms of assembly, homodimer.

It localises to the secreted. In terms of biological role, colony queen number, a major feature of social organization, is associated with worker genotype for Gp-9. Colonies are headed by either a single reproductive queen (monogyne form) or multiple queens (polygyne form). Differences in worker Gp-9 genotypes between social forms may cause differences in workers' abilities to recognize queens and regulate their numbers. The protein is Pheromone-binding protein Gp-9 of Solenopsis tridens (Fire ant).